The chain runs to 253 residues: Sulfate transporter CysZ (253 aa).

4 helical membrane passes run 31–51 (FVIL…WWLF), 75–95 (LLWP…FSTI), 151–171 (IVLL…PVLW), and 222–242 (IPLL…AMWV).

Belongs to the CysZ family.

Its subcellular location is the cell inner membrane. Functionally, high affinity, high specificity proton-dependent sulfate transporter, which mediates sulfate uptake. Provides the sulfur source for the cysteine synthesis pathway. The protein is Sulfate transporter CysZ of Escherichia coli O7:K1 (strain IAI39 / ExPEC).